Consider the following 429-residue polypeptide: Trigger factor (429 aa).

A PPIase FKBP-type domain is found at 161–246 (GDRLSIDFKG…INEIASPKEL (86 aa)).

Belongs to the FKBP-type PPIase family. Tig subfamily.

The protein resides in the cytoplasm. The catalysed reaction is [protein]-peptidylproline (omega=180) = [protein]-peptidylproline (omega=0). In terms of biological role, involved in protein export. Acts as a chaperone by maintaining the newly synthesized protein in an open conformation. Functions as a peptidyl-prolyl cis-trans isomerase. The protein is Trigger factor of Vesicomyosocius okutanii subsp. Calyptogena okutanii (strain HA).